A 32-amino-acid polypeptide reads, in one-letter code: Photosystem I reaction center subunit XII (32 aa).

The chain crosses the membrane as a helical span at residues 9 to 28 (VYIALVVALIPGLLAWRLAT).

This sequence belongs to the PsaM family.

It localises to the cellular thylakoid membrane. This chain is Photosystem I reaction center subunit XII, found in Nostoc sp. (strain PCC 7120 / SAG 25.82 / UTEX 2576).